A 424-amino-acid chain; its full sequence is UDP-N-acetylglucosamine 1-carboxyvinyltransferase 3 (424 aa).

22–23 (KN) provides a ligand contact to phosphoenolpyruvate. R94 lines the UDP-N-acetyl-alpha-D-glucosamine pocket. The Proton donor role is filled by D118. UDP-N-acetyl-alpha-D-glucosamine-binding positions include 123–127 (RPVDQ), D306, and L328.

It belongs to the EPSP synthase family. MurA subfamily.

The protein resides in the cytoplasm. The enzyme catalyses phosphoenolpyruvate + UDP-N-acetyl-alpha-D-glucosamine = UDP-N-acetyl-3-O-(1-carboxyvinyl)-alpha-D-glucosamine + phosphate. It functions in the pathway cell wall biogenesis; peptidoglycan biosynthesis. Its function is as follows. Cell wall formation. Adds enolpyruvyl to UDP-N-acetylglucosamine. This chain is UDP-N-acetylglucosamine 1-carboxyvinyltransferase 3, found in Symbiobacterium thermophilum (strain DSM 24528 / JCM 14929 / IAM 14863 / T).